We begin with the raw amino-acid sequence, 243 residues long: DNA repair protein RecO (243 aa).

It belongs to the RecO family.

Functionally, involved in DNA repair and RecF pathway recombination. The protein is DNA repair protein RecO of Thermobifida fusca (strain YX).